We begin with the raw amino-acid sequence, 597 residues long: Plasmepsin V (597 aa).

The Lumenal portion of the chain corresponds to 1–551 (MNNYFLRKEN…EKENIFLKVS (551 aa)). Residues 33 to 88 (CNNVENKIDNVGKKIENVGKKIGDMENKNDNVENKNDNVENKNDNVGNKNDNVKNA) adopt a coiled-coil conformation. Basic and acidic residues predominate over residues 58-75 (ENKNDNVENKNDNVENKN). The segment at 58 to 83 (ENKNDNVENKNDNVENKNDNVGNKND) is disordered. The Peptidase A1 domain maps to 107–521 (YFLDIDIGKP…DLQQNQIAFI (415 aa)). Asp-125 is a catalytic residue. Disulfide bonds link Cys-135–Cys-218, Cys-138–Cys-141, Cys-162–Cys-173, Cys-167–Cys-178, Cys-266–Cys-525, Cys-396–Cys-441, and Cys-450–Cys-486. A compositionally biased stretch (basic and acidic residues) spans 289-298 (KEKQKMDKSD). Residues 289-323 (KEKQKMDKSDNNSSNKGNVSIKLKNNDKNDDEENN) are disordered. The span at 299–311 (NNSSNKGNVSIKL) shows a compositional bias: low complexity. Asp-372 is a catalytic residue. A helical membrane pass occupies residues 552–572 (YINLYCLWLLLALTILLSLIL). Over 573-597 (YVRKMFYMDYFPLSDQNKSPIQEST) the chain is Cytoplasmic.

The protein belongs to the peptidase A1 family. In terms of assembly, component of a complex composed of SPC25 and PMV; the interaction is mediated via the transmembrane domains. The complex interacts with the SEC61 channel-forming translocon complex and is involved in the recognition and import of PEXEL motif-containing proteins into the ER for subsequent export. Post-translationally, it is not clear if the zymogen has a cleavable propeptide. In vitro, appears to be cleaved between Asn-87 and Ala-88. Cleavage of the putative propeptide is dispensable for catalytic activity.

It localises to the endoplasmic reticulum membrane. Functionally, during the asexual blood stage, plays an essential role in the export of several proteins into the host erythrocytes by cleaving the pentameric localization motif RxLxE/Q/D (termed Plasmodium export element (PEXEL)) located downstream of the N-terminal secretory signal sequence. Specifically, cleaves after the leucine residue in the RxLxE/Q/D (or RxLxxE) motif of exported proteins including RESA, EMP2, EMP3, KAHRP, RIF/Rifin and STEVOR. Also, by regulating protein export, plays an essential role in gametocyte development and thus parasite transmission to the mosquito vector. The sequence is that of Plasmepsin V from Plasmodium falciparum (isolate HB3).